The following is a 269-amino-acid chain: Diaminopimelate epimerase (269 aa).

Residues Asn-13, Gln-47, and Asn-65 each coordinate substrate. Catalysis depends on Cys-74, which acts as the Proton donor. Substrate is bound by residues 75 to 76 (GN), Asn-149, Asn-182, and 200 to 201 (ER). Cys-209 acts as the Proton acceptor in catalysis. A substrate-binding site is contributed by 210-211 (GT).

Belongs to the diaminopimelate epimerase family. Homodimer.

The protein localises to the cytoplasm. It catalyses the reaction (2S,6S)-2,6-diaminopimelate = meso-2,6-diaminopimelate. Its pathway is amino-acid biosynthesis; L-lysine biosynthesis via DAP pathway; DL-2,6-diaminopimelate from LL-2,6-diaminopimelate: step 1/1. Its function is as follows. Catalyzes the stereoinversion of LL-2,6-diaminopimelate (L,L-DAP) to meso-diaminopimelate (meso-DAP), a precursor of L-lysine and an essential component of the bacterial peptidoglycan. The chain is Diaminopimelate epimerase from Erythrobacter litoralis (strain HTCC2594).